A 1164-amino-acid polypeptide reads, in one-letter code: Hamartin (1164 aa).

A Glycyl lysine isopeptide (Lys-Gly) (interchain with G-Cter in ubiquitin) cross-link involves residue K30. The interval 403–787 is mediates interaction with WDR45B; sequence SDDYVHISLP…QIRQLQHDRE (385 aa). The tract at residues 439–571 is disordered; sequence LNDRGSEEPP…ADESPAGDRE (133 aa). Over residues 474 to 487 the composition is skewed to basic and acidic residues; the sequence is EKDKEEAAISRELS. 5 positions are modified to phosphoserine: S487, S505, S511, S521, and S598. Positions 513 to 530 are enriched in polar residues; it reads PGSQRKTHSAASSSQGAS. Residues 721–997 are a coiled coil; that stretch reads RKVIKAAALE…AAEERLDCCN (277 aa). The tract at residues 1006 to 1085 is disordered; sequence GHNEEASGHN…TTVGSLPSSK (80 aa). The span at 1007–1020 shows a compositional bias: basic and acidic residues; that stretch reads HNEEASGHNGETKT. The span at 1073 to 1085 shows a compositional bias: polar residues; it reads SIPTTVGSLPSSK. S1100 is subject to Phosphoserine. Residues 1131-1164 are disordered; it reads IPLNLDGPHPSPPTPDSVGQLHIMDYNETHHEHS. A compositionally biased stretch (basic and acidic residues) spans 1155–1164; that stretch reads DYNETHHEHS.

Component of the TSC-TBC complex (also named Rhebulator complex), composed of 2 molecules of TSC1, 2 molecules of TSC2 and 1 molecule of TBC1D7. Probably forms a complex composed of chaperones HSP90 and HSP70, co-chaperones STIP1/HOP, CDC37, PPP5C, PTGES3/p23, TSC1 and client protein TSC2. Forms a complex composed of chaperones HSP90 and HSP70, co-chaperones CDC37, PPP5C, TSC1 and client protein TSC2, CDK4, AKT, RAF1 and NR3C1; this complex does not contain co-chaperones STIP1/HOP and PTGES3/p23. Forms a complex containing HSP90AA1, TSC1 and TSC2; TSC1 is required to recruit TCS2 to the complex. Interacts (via C-terminus) with the closed form of HSP90AA1 (via the middle domain and TPR repeat-binding motif). Interacts with DOCK7. Interacts with FBXW5. Interacts with WDR45B. Interacts with RPAP3 and URI1. In terms of processing, phosphorylation at Ser-505 does not affect interaction with TSC2. Post-translationally, 'Lys-63'-linked ubiquitinated at Lys-30 by PELI1; the ubiquitination promotes TSC1/TSC2 complex stability. In terms of tissue distribution, highly expressed in skeletal muscle, followed by heart, brain, placenta, pancreas, lung, liver and kidney. Also expressed in embryonic kidney cells.

The protein resides in the lysosome membrane. The protein localises to the cytoplasm. Its subcellular location is the cytosol. In terms of biological role, non-catalytic component of the TSC-TBC complex, a multiprotein complex that acts as a negative regulator of the canonical mTORC1 complex, an evolutionarily conserved central nutrient sensor that stimulates anabolic reactions and macromolecule biosynthesis to promote cellular biomass generation and growth. The TSC-TBC complex acts as a GTPase-activating protein (GAP) for the small GTPase RHEB, a direct activator of the protein kinase activity of mTORC1. In absence of nutrients, the TSC-TBC complex inhibits mTORC1, thereby preventing phosphorylation of ribosomal protein S6 kinase (RPS6KB1 and RPS6KB2) and EIF4EBP1 (4E-BP1) by the mTORC1 signaling. The TSC-TBC complex is inactivated in response to nutrients, relieving inhibition of mTORC1. Within the TSC-TBC complex, TSC1 stabilizes TSC2 and prevents TSC2 self-aggregation. Acts as a tumor suppressor. Involved in microtubule-mediated protein transport via its ability to regulate mTORC1 signaling. Also acts as a co-chaperone for HSP90AA1 facilitating HSP90AA1 chaperoning of protein clients such as kinases, TSC2 and glucocorticoid receptor NR3C1. Increases ATP binding to HSP90AA1 and inhibits HSP90AA1 ATPase activity. Competes with the activating co-chaperone AHSA1 for binding to HSP90AA1, thereby providing a reciprocal regulatory mechanism for chaperoning of client proteins. Recruits TSC2 to HSP90AA1 and stabilizes TSC2 by preventing the interaction between TSC2 and ubiquitin ligase HERC1. The chain is Hamartin from Homo sapiens (Human).